The sequence spans 287 residues: Cbb3-type cytochrome c oxidase subunit FixP (287 aa).

Residues methionine 1–tryptophan 33 lie on the Cytoplasmic side of the membrane. A helical transmembrane segment spans residues isoleucine 34–isoleucine 54. Topologically, residues proline 55–threonine 287 are periplasmic. Cytochrome c domains follow at residues phenylalanine 108–threonine 196 and glycine 203–glycine 284. Heme c-binding residues include cysteine 121, cysteine 124, histidine 125, methionine 173, cysteine 216, cysteine 219, histidine 220, and methionine 261.

This sequence belongs to the CcoP / FixP family. As to quaternary structure, component of the cbb3-type cytochrome c oxidase at least composed of FixN, FixO, FixQ and FixP. It depends on heme c as a cofactor.

The protein resides in the cell inner membrane. It functions in the pathway energy metabolism; oxidative phosphorylation. C-type cytochrome. Part of the cbb3-type cytochrome c oxidase complex. FixP subunit is required for transferring electrons from donor cytochrome c via its heme groups to FixO subunit. From there, electrons are shuttled to the catalytic binuclear center of FixN subunit where oxygen reduction takes place. The complex also functions as a proton pump. The polypeptide is Cbb3-type cytochrome c oxidase subunit FixP (Rhizobium etli (strain ATCC 51251 / DSM 11541 / JCM 21823 / NBRC 15573 / CFN 42)).